Consider the following 90-residue polypeptide: Small ribosomal subunit protein uS15c (90 aa).

It belongs to the universal ribosomal protein uS15 family. As to quaternary structure, part of the 30S ribosomal subunit.

It is found in the plastid. The protein resides in the chloroplast. In Secale cereale (Rye), this protein is Small ribosomal subunit protein uS15c (rps15).